The chain runs to 606 residues: V-type proton ATPase catalytic subunit A (606 aa).

At Ala-2 the chain carries N-acetylalanine. 240 to 247 (AFGCGKTV) is an ATP binding site.

This sequence belongs to the ATPase alpha/beta chains family. In terms of assembly, V-ATPase is a heteromultimeric enzyme made up of two complexes: the ATP-hydrolytic V1 complex and the proton translocation V0 complex. The V1 complex consists of three catalytic AB heterodimers that form a heterohexamer, three peripheral stalks each consisting of EG heterodimers, one central rotor including subunits D and F, and the regulatory subunits C and H. The proton translocation complex V0 consists of the proton transport subunit a, a ring of proteolipid subunits c9c'', rotary subunit d, subunits e and f, and the accessory subunits vah-19/Ac45 and vah-20/PRR. Expressed in proximal but not distal germ cells.

The catalysed reaction is ATP + H2O + 4 H(+)(in) = ADP + phosphate + 5 H(+)(out). With respect to regulation, ATP hydrolysis occurs at the interface between the nucleotide-binding domains of subunits A and B. ATP hydrolysis triggers a conformational change in the subunits D and F, which induces a shift of subunit d. The c-ring is subsequently rotated and results in a continuous proton translocation across the membrane. Catalytic subunit of the V1 complex of vacuolar(H+)-ATPase (V-ATPase), a multisubunit enzyme composed of a peripheral complex (V1) that hydrolyzes ATP and a membrane integral complex (V0) that translocates protons. V-ATPase is responsible for acidifying and maintaining the pH of intracellular compartments and in some cell types, is targeted to the plasma membrane, where it is responsible for acidifying the extracellular environment. Required along with other vacuolar ATPase components for the removal of protein aggregates which form in immature oocytes in the distal gonad. This removal occurs as the oocytes mature and move to the proximal gonad, is triggered by the introduction of sperm through mating and occurs before fertilization. The introduction of sperm triggers V-ATPase accumulation in proximal oocytes and induces lysosomal acidification which leads to engulfing of protein aggregates by lysosomes and subsequent clearance of the aggregates. Lysosomal acidification also leads to changes in mitochondrial morphology and function. Mitochondria in distal immature oocytes are fragmented, produce high levels of reactive oxygen species (ROS) and have high membrane potential, indicative of metabolic inactivity. In contrast, mitochondria in proximal mature oocytes are tubular with lower ROS levels and membrane potential, indicative of an active metabolic state required for aggregate mobilization before clearance. Involved in receptor-mediated endocytosis. In Caenorhabditis elegans, this protein is V-type proton ATPase catalytic subunit A.